Consider the following 697-residue polypeptide: Portal protein (697 aa).

A disordered region spans residues 633-697; the sequence is MSREAAGGVP…RRAGGPYGFH (65 aa). The span at 664–689 shows a compositional bias: basic and acidic residues; that stretch reads ITADEERRGPERVGRFRNGGPDDPRR.

This sequence belongs to the herpesviridae portal protein family. Homododecamerizes. Interacts with terminase subunits TRM1 and TRM3.

Its subcellular location is the virion. It localises to the host nucleus. Forms a portal in the viral capsid through which viral DNA is translocated during DNA packaging. Assembles as a dodecamer at a single fivefold axe of the T=16 icosahedric capsid. Binds to the molecular motor that translocates the viral DNA, termed terminase. This is Portal protein (UL104) from Homo sapiens (Human).